A 282-amino-acid chain; its full sequence is Protoheme IX farnesyltransferase (282 aa).

Helical transmembrane passes span 9-29 (LAKP…FLLA), 39-59 (LPLF…GCVF), 79-99 (LVTG…LLIL), 102-122 (LVLY…GFIV), 139-159 (VLGG…VVNI), 165-185 (LALF…IAML), 210-230 (IMLF…VLGS), 231-251 (ADLF…YKSI), and 261-281 (VFAK…CLTM).

Belongs to the UbiA prenyltransferase family. Protoheme IX farnesyltransferase subfamily.

Its subcellular location is the cell inner membrane. The catalysed reaction is heme b + (2E,6E)-farnesyl diphosphate + H2O = Fe(II)-heme o + diphosphate. The protein operates within porphyrin-containing compound metabolism; heme O biosynthesis; heme O from protoheme: step 1/1. Functionally, converts heme B (protoheme IX) to heme O by substitution of the vinyl group on carbon 2 of heme B porphyrin ring with a hydroxyethyl farnesyl side group. The protein is Protoheme IX farnesyltransferase of Francisella tularensis subsp. tularensis (strain FSC 198).